The primary structure comprises 1661 residues: Mediator of RNA polymerase II transcription subunit 12 (1661 aa).

3 disordered regions span residues 1 to 22, 524 to 550, and 1501 to 1527; these read MSKTKNRNSLLSSHNRTSVSNS, KDRRRSNSLQQSLSQDTKNNYNSITGK, and DDMTTDTSHQQHSPSNDYLSRSNPDGT. Composition is skewed to polar residues over residues 7 to 22, 539 to 548, and 1505 to 1527; these read RNSLLSSHNRTSVSNS, DTKNNYNSIT, and TDTSHQQHSPSNDYLSRSNPDGT.

The protein belongs to the Mediator complex subunit 12 family. As to quaternary structure, component of the SRB8-11 complex, which itself associates with the Mediator complex.

It is found in the nucleus. In terms of biological role, component of the SRB8-11 complex. The SRB8-11 complex is a regulatory module of the Mediator complex which is itself involved in regulation of basal and activated RNA polymerase II-dependent transcription. The SRB8-11 complex may be involved in the transcriptional repression of a subset of genes regulated by Mediator. It may inhibit the association of the Mediator complex with RNA polymerase II to form the holoenzyme complex. This Debaryomyces hansenii (strain ATCC 36239 / CBS 767 / BCRC 21394 / JCM 1990 / NBRC 0083 / IGC 2968) (Yeast) protein is Mediator of RNA polymerase II transcription subunit 12 (SRB8).